A 341-amino-acid chain; its full sequence is Hyaluronan and proteoglycan link protein 2 (341 aa).

A signal peptide spans methionine 1–glycine 27. The Ig-like V-type domain occupies proline 35–threonine 143. Disulfide bonds link cysteine 58/cysteine 129, cysteine 171/cysteine 241, cysteine 195/cysteine 216, cysteine 266/cysteine 337, and cysteine 291/cysteine 312. Link domains lie at valine 149–threonine 243 and leucine 246–alanine 339.

The protein belongs to the HAPLN family. Brain.

It localises to the secreted. Its subcellular location is the extracellular space. The protein resides in the extracellular matrix. Mediates a firm binding of versican V2 to hyaluronic acid. May play a pivotal role in the formation of the hyaluronan-associated matrix in the central nervous system (CNS) which facilitates neuronal conduction and general structural stabilization. Binds to hyaluronic acid. The protein is Hyaluronan and proteoglycan link protein 2 (Hapln2) of Rattus norvegicus (Rat).